A 609-amino-acid chain; its full sequence is Laccase-1 (609 aa).

The first 20 residues, 1–20 (MYLSTVLFPLLALNLGLSHA), serve as a signal peptide directing secretion. In terms of domain architecture, Plastocyanin-like 1 spans 45–141 (VFTNGEYPGP…DGQVGAMYIR (97 aa)). N-linked (GlcNAc...) asparagine glycosylation is present at N75. Cu cation-binding residues include H79, H81, H123, and H125. A glycan (N-linked (GlcNAc...) asparagine) is linked at N257. Positions 270–372 (TPSSVEPPVI…MSVYAILSYV (103 aa)) constitute a Plastocyanin-like 2 domain. Residues N403, N443, and N486 are each glycosylated (N-linked (GlcNAc...) asparagine). Residues 463-602 (STPLLFEPDP…MGGMALALLD (140 aa)) form the Plastocyanin-like 3 domain. 3 residues coordinate Cu cation: H508, H511, and H513. N531 and N546 each carry an N-linked (GlcNAc...) asparagine glycan. 4 residues coordinate Cu cation: H585, C586, H587, and H591.

The protein belongs to the multicopper oxidase family. Cu cation is required as a cofactor.

It localises to the secreted. It carries out the reaction 4 hydroquinone + O2 = 4 benzosemiquinone + 2 H2O. Functionally, required for the conversion of the yellow polyketide pigment synthesized by wA to the conidial green pigment. The protein is Laccase-1 (yA) of Emericella nidulans (strain FGSC A4 / ATCC 38163 / CBS 112.46 / NRRL 194 / M139) (Aspergillus nidulans).